Reading from the N-terminus, the 315-residue chain is C1GALT1-specific chaperone 1-like protein (315 aa).

The Cytoplasmic segment spans residues Met-1–Ser-8. The helical; Signal-anchor for type II membrane protein transmembrane segment at Phe-9–Ile-29 threads the bilayer. The Lumenal portion of the chain corresponds to His-30 to Asp-315. N-linked (GlcNAc...) asparagine glycosylation is found at Asn-55 and Asn-301.

It belongs to the glycosyltransferase 31 family. Beta3-Gal-T subfamily.

The protein localises to the membrane. The polypeptide is C1GALT1-specific chaperone 1-like protein (Homo sapiens (Human)).